The following is a 292-amino-acid chain: MSEIRLYVTTTEKKSEQVLDLMTPVFEDEELPIATSEIDEKSDIWEASIYLYADDEDDVRARFAALLKPAFPELVIKKEVIPDVDWIAKSLEGLKPVRAGRFLVHGSHDRDKIGSSDIAIEIDAGQAFGTGHHGTTAGCLETIETVLASRRVRNALDLGTGSGVLAIGVRKLRNIPVLATDIDPIAVRVARENVRRNGIASGIALETAPGFHSTAFSRHGPFDLIIANILARPLIKMAPQLVAHLAPGGSVILSGILAEQRWKVLAAYNGAKMRHVRTIWRNGWVTIHLDRP.

S-adenosyl-L-methionine is bound by residues threonine 136, glycine 159, aspartate 181, and asparagine 228.

This sequence belongs to the methyltransferase superfamily. PrmA family.

It localises to the cytoplasm. The enzyme catalyses L-lysyl-[protein] + 3 S-adenosyl-L-methionine = N(6),N(6),N(6)-trimethyl-L-lysyl-[protein] + 3 S-adenosyl-L-homocysteine + 3 H(+). In terms of biological role, methylates ribosomal protein L11. This Rhizobium rhizogenes (strain K84 / ATCC BAA-868) (Agrobacterium radiobacter) protein is Ribosomal protein L11 methyltransferase.